We begin with the raw amino-acid sequence, 419 residues long: Argininosuccinate synthase (419 aa).

ATP-binding positions include 9-17 (AYSGGLDTS) and Ala-35. L-citrulline-binding residues include Tyr-86 and Ser-91. 114–122 (AHGATGKGN) serves as a coordination point for ATP. Positions 118, 122, and 123 each coordinate L-aspartate. Asn-122 serves as a coordination point for L-citrulline. L-citrulline-binding residues include Arg-126, Ser-179, Ser-188, Glu-270, and Tyr-282.

This sequence belongs to the argininosuccinate synthase family. Type 1 subfamily. Homotetramer.

It carries out the reaction L-citrulline + L-aspartate + ATP = 2-(N(omega)-L-arginino)succinate + AMP + diphosphate + H(+). It functions in the pathway amino-acid biosynthesis; L-arginine biosynthesis; L-arginine from L-ornithine and carbamoyl phosphate: step 2/3. It participates in nitrogen metabolism; urea cycle; (N(omega)-L-arginino)succinate from L-aspartate and L-citrulline: step 1/1. The polypeptide is Argininosuccinate synthase (Drosophila melanogaster (Fruit fly)).